Reading from the N-terminus, the 447-residue chain is Peptide-N(4)-(N-acetyl-beta-glucosaminyl)asparagine amidase (447 aa).

The Zn(2+) site is built by C209, C212, C241, and C244. C267 (nucleophile) is an active-site residue. Active-site residues include H294 and D311.

It belongs to the transglutaminase-like superfamily. PNGase family. Zn(2+) serves as cofactor.

The protein localises to the cytoplasm. It carries out the reaction Hydrolysis of an N(4)-(acetyl-beta-D-glucosaminyl)asparagine residue in which the glucosamine residue may be further glycosylated, to yield a (substituted) N-acetyl-beta-D-glucosaminylamine and a peptide containing an aspartate residue.. Its function is as follows. Specifically deglycosylates the denatured form of N-linked glycoproteins in the cytoplasm and assists their proteasome-mediated degradation. Cleaves the beta-aspartyl-glucosamine (GlcNAc) of the glycan and the amide side chain of Asn, converting Asn to Asp. Prefers proteins containing high-mannose over those bearing complex type oligosaccharides. Can recognize misfolded proteins in the endoplasmic reticulum that are exported to the cytosol to be destroyed and deglycosylate them, while it has no activity toward native proteins. Deglycosylation is a prerequisite for subsequent proteasome-mediated degradation of some, but not all, misfolded glycoproteins. This Oryza sativa subsp. japonica (Rice) protein is Peptide-N(4)-(N-acetyl-beta-glucosaminyl)asparagine amidase (PNG1).